Reading from the N-terminus, the 943-residue chain is Neutral alpha-glucosidase AB (943 aa).

Positions Met1–Ser23 are cleaved as a signal peptide. Residues Phe186–Thr231 are disordered. A compositionally biased stretch (basic and acidic residues) spans Pro198–Asn211. Residue Asp540 is the Nucleophile of the active site. Glu543 is an active-site residue. Asp617 functions as the Proton donor in the catalytic mechanism. 3 N-linked (GlcNAc...) asparagine glycosylation sites follow: Asn878, Asn887, and Asn907.

This sequence belongs to the glycosyl hydrolase 31 family.

It localises to the endoplasmic reticulum. The protein resides in the golgi apparatus. It catalyses the reaction N(4)-(alpha-D-Glc-(1-&gt;3)-alpha-D-Man-(1-&gt;2)-alpha-D-Man-(1-&gt;2)-alpha-D-Man-(1-&gt;3)-[alpha-D-Man-(1-&gt;2)-alpha-D-Man-(1-&gt;3)-[alpha-D-Man-(1-&gt;2)-alpha-D-Man-(1-&gt;6)]-alpha-D-Man-(1-&gt;6)]-beta-D-Man-(1-&gt;4)-beta-D-GlcNAc-(1-&gt;4)-beta-D-GlcNAc)-L-asparaginyl-[protein] + H2O = N(4)-(alpha-D-Man-(1-&gt;2)-alpha-D-Man-(1-&gt;2)-alpha-D-Man-(1-&gt;3)-[alpha-D-Man-(1-&gt;2)-alpha-D-Man-(1-&gt;3)-[alpha-D-Man-(1-&gt;2)-alpha-D-Man-(1-&gt;6)]-alpha-D-Man-(1-&gt;6)]-beta-D-Man-(1-&gt;4)-beta-D-GlcNAc-(1-&gt;4)-beta-D-GlcNAc)-L-asparaginyl-[protein] (N-glucan mannose isomer 9A1,2,3B1,2,3) + beta-D-glucose. The enzyme catalyses N(4)-(alpha-D-Glc-(1-&gt;3)-alpha-D-Glc-(1-&gt;3)-alpha-D-Man-(1-&gt;2)-alpha-D-Man-(1-&gt;2)-alpha-D-Man-(1-&gt;3)-[alpha-D-Man-(1-&gt;2)-alpha-D-Man-(1-&gt;3)-[alpha-D-Man-(1-&gt;2)-alpha-D-Man-(1-&gt;6)]-alpha-D-Man-(1-&gt;6)]-beta-D-Man-(1-&gt;4)-beta-D-GlcNAc-(1-&gt;4)-beta-D-GlcNAc)-L-asparaginyl-[protein] + H2O = N(4)-(alpha-D-Glc-(1-&gt;3)-alpha-D-Man-(1-&gt;2)-alpha-D-Man-(1-&gt;2)-alpha-D-Man-(1-&gt;3)-[alpha-D-Man-(1-&gt;2)-alpha-D-Man-(1-&gt;3)-[alpha-D-Man-(1-&gt;2)-alpha-D-Man-(1-&gt;6)]-alpha-D-Man-(1-&gt;6)]-beta-D-Man-(1-&gt;4)-beta-D-GlcNAc-(1-&gt;4)-beta-D-GlcNAc)-L-asparaginyl-[protein] + beta-D-glucose. Its pathway is glycan metabolism; N-glycan metabolism. In terms of biological role, cleaves sequentially the 2 innermost alpha-1,3-linked glucose residues from N-linked oligosaccharides on newly synthesized glycoproteins. In Dictyostelium discoideum (Social amoeba), this protein is Neutral alpha-glucosidase AB (modA).